The sequence spans 502 residues: Glycerol kinase (502 aa).

Threonine 13 contributes to the ADP binding site. The ATP site is built by threonine 13, threonine 14, and serine 15. Threonine 13 lines the sn-glycerol 3-phosphate pocket. Residue arginine 17 participates in ADP binding. Residues arginine 83, glutamate 84, tyrosine 136, and aspartate 246 each contribute to the sn-glycerol 3-phosphate site. Positions 83, 84, 136, 246, and 247 each coordinate glycerol. 2 residues coordinate ADP: threonine 268 and glycine 311. ATP is bound by residues threonine 268, glycine 311, glutamine 315, and glycine 412. Residues glycine 412 and asparagine 416 each coordinate ADP.

Belongs to the FGGY kinase family.

The catalysed reaction is glycerol + ATP = sn-glycerol 3-phosphate + ADP + H(+). The protein operates within polyol metabolism; glycerol degradation via glycerol kinase pathway; sn-glycerol 3-phosphate from glycerol: step 1/1. Its activity is regulated as follows. Inhibited by fructose 1,6-bisphosphate (FBP). Key enzyme in the regulation of glycerol uptake and metabolism. Catalyzes the phosphorylation of glycerol to yield sn-glycerol 3-phosphate. The chain is Glycerol kinase from Francisella tularensis subsp. tularensis (strain FSC 198).